Reading from the N-terminus, the 401-residue chain is Carbamoyl phosphate synthase small chain (401 aa).

A CPSase region spans residues 1–203 (MTETAPWTTR…KGYGTLGEAD (203 aa)). Residues Ser-56, Gly-255, and Gly-257 each coordinate L-glutamine. Positions 207–395 (HVVCVDFGVK…VNLLRENKGE (189 aa)) constitute a Glutamine amidotransferase type-1 domain. Catalysis depends on Cys-284, which acts as the Nucleophile. L-glutamine-binding residues include Leu-285, Gln-288, Asn-326, Gly-328, and Phe-329. Residues His-368 and Glu-370 contribute to the active site.

Belongs to the CarA family. Composed of two chains; the small (or glutamine) chain promotes the hydrolysis of glutamine to ammonia, which is used by the large (or ammonia) chain to synthesize carbamoyl phosphate. Tetramer of heterodimers (alpha,beta)4.

The catalysed reaction is hydrogencarbonate + L-glutamine + 2 ATP + H2O = carbamoyl phosphate + L-glutamate + 2 ADP + phosphate + 2 H(+). It catalyses the reaction L-glutamine + H2O = L-glutamate + NH4(+). It functions in the pathway amino-acid biosynthesis; L-arginine biosynthesis; carbamoyl phosphate from bicarbonate: step 1/1. Its pathway is pyrimidine metabolism; UMP biosynthesis via de novo pathway; (S)-dihydroorotate from bicarbonate: step 1/3. In terms of biological role, small subunit of the glutamine-dependent carbamoyl phosphate synthetase (CPSase). CPSase catalyzes the formation of carbamoyl phosphate from the ammonia moiety of glutamine, carbonate, and phosphate donated by ATP, constituting the first step of 2 biosynthetic pathways, one leading to arginine and/or urea and the other to pyrimidine nucleotides. The small subunit (glutamine amidotransferase) binds and cleaves glutamine to supply the large subunit with the substrate ammonia. This Agrobacterium fabrum (strain C58 / ATCC 33970) (Agrobacterium tumefaciens (strain C58)) protein is Carbamoyl phosphate synthase small chain.